Here is a 371-residue protein sequence, read N- to C-terminus: DNA replication and repair protein RecF (371 aa).

30 to 37 (GKNGQGKT) serves as a coordination point for ATP.

The protein belongs to the RecF family.

The protein localises to the cytoplasm. Its function is as follows. The RecF protein is involved in DNA metabolism; it is required for DNA replication and normal SOS inducibility. RecF binds preferentially to single-stranded, linear DNA. It also seems to bind ATP. This Clostridioides difficile (strain 630) (Peptoclostridium difficile) protein is DNA replication and repair protein RecF.